The following is a 280-amino-acid chain: Dermonecrotic toxin LsSicTox-alphaIA1 (280 aa).

The active site involves histidine 12. Mg(2+) is bound by residues glutamate 32 and aspartate 34. Histidine 48 acts as the Nucleophile in catalysis. 2 disulfide bridges follow: cysteine 52–cysteine 58 and cysteine 54–cysteine 197. Position 92 (aspartate 92) interacts with Mg(2+).

The protein belongs to the arthropod phospholipase D family. Class II subfamily. Mg(2+) serves as cofactor. In terms of tissue distribution, expressed by the venom gland.

The protein localises to the secreted. The catalysed reaction is an N-(acyl)-sphingosylphosphocholine = an N-(acyl)-sphingosyl-1,3-cyclic phosphate + choline. It catalyses the reaction an N-(acyl)-sphingosylphosphoethanolamine = an N-(acyl)-sphingosyl-1,3-cyclic phosphate + ethanolamine. The enzyme catalyses a 1-acyl-sn-glycero-3-phosphocholine = a 1-acyl-sn-glycero-2,3-cyclic phosphate + choline. It carries out the reaction a 1-acyl-sn-glycero-3-phosphoethanolamine = a 1-acyl-sn-glycero-2,3-cyclic phosphate + ethanolamine. In terms of biological role, dermonecrotic toxins cleave the phosphodiester linkage between the phosphate and headgroup of certain phospholipids (sphingolipid and lysolipid substrates), forming an alcohol (often choline) and a cyclic phosphate. This toxin acts on sphingomyelin (SM). It may also act on ceramide phosphoethanolamine (CPE), lysophosphatidylcholine (LPC) and lysophosphatidylethanolamine (LPE), but not on lysophosphatidylserine (LPS), and lysophosphatidylglycerol (LPG). It acts by transphosphatidylation, releasing exclusively cyclic phosphate products as second products. Induces dermonecrosis, hemolysis, increased vascular permeability, edema, inflammatory response, and platelet aggregation. The polypeptide is Dermonecrotic toxin LsSicTox-alphaIA1 (Loxosceles similis (Brazilian brown spider)).